The primary structure comprises 141 residues: Large ribosomal subunit protein uL11 (141 aa).

Belongs to the universal ribosomal protein uL11 family. In terms of assembly, part of the ribosomal stalk of the 50S ribosomal subunit. Interacts with L10 and the large rRNA to form the base of the stalk. L10 forms an elongated spine to which L12 dimers bind in a sequential fashion forming a multimeric L10(L12)X complex. One or more lysine residues are methylated.

In terms of biological role, forms part of the ribosomal stalk which helps the ribosome interact with GTP-bound translation factors. The sequence is that of Large ribosomal subunit protein uL11 from Levilactobacillus brevis (strain ATCC 367 / BCRC 12310 / CIP 105137 / JCM 1170 / LMG 11437 / NCIMB 947 / NCTC 947) (Lactobacillus brevis).